A 168-amino-acid polypeptide reads, in one-letter code: Shikimate kinase (168 aa).

Position 12–17 (12–17) interacts with ATP; sequence GAGKST. Residue serine 16 participates in Mg(2+) binding. Residues aspartate 34, arginine 58, and glycine 80 each coordinate substrate. Arginine 117 provides a ligand contact to ATP. Arginine 136 contributes to the substrate binding site. Arginine 153 lines the ATP pocket.

It belongs to the shikimate kinase family. In terms of assembly, monomer. Mg(2+) is required as a cofactor.

It is found in the cytoplasm. It carries out the reaction shikimate + ATP = 3-phosphoshikimate + ADP + H(+). It participates in metabolic intermediate biosynthesis; chorismate biosynthesis; chorismate from D-erythrose 4-phosphate and phosphoenolpyruvate: step 5/7. In terms of biological role, catalyzes the specific phosphorylation of the 3-hydroxyl group of shikimic acid using ATP as a cosubstrate. This Rhodococcus jostii (strain RHA1) protein is Shikimate kinase.